The sequence spans 208 residues: Calcyphosin-like protein (208 aa).

4 consecutive EF-hand domains span residues 39–74 (AGIK…YAVV), 75–110 (MEKE…PMSR), 111–146 (ARKE…KHHP), and 154–191 (TEEQ…VSAS). Residues Asp-52, Asn-54, Asn-56, Thr-58, Glu-63, Asp-88, Asp-90, Ser-92, Thr-94, and Glu-99 each contribute to the Ca(2+) site.

The protein resides in the cytoplasm. The protein is Calcyphosin-like protein (Capsl) of Mus musculus (Mouse).